Here is a 477-residue protein sequence, read N- to C-terminus: Glycogen synthase (477 aa).

Residue K15 participates in ADP-alpha-D-glucose binding.

It belongs to the glycosyltransferase 1 family. Bacterial/plant glycogen synthase subfamily.

It catalyses the reaction [(1-&gt;4)-alpha-D-glucosyl](n) + ADP-alpha-D-glucose = [(1-&gt;4)-alpha-D-glucosyl](n+1) + ADP + H(+). The protein operates within glycan biosynthesis; glycogen biosynthesis. Synthesizes alpha-1,4-glucan chains using ADP-glucose. The sequence is that of Glycogen synthase from Streptococcus pneumoniae (strain ATCC 700669 / Spain 23F-1).